The following is a 382-amino-acid chain: Ribosomal RNA large subunit methyltransferase G (382 aa).

The protein belongs to the methyltransferase superfamily. RlmG family.

It localises to the cytoplasm. It catalyses the reaction guanosine(1835) in 23S rRNA + S-adenosyl-L-methionine = N(2)-methylguanosine(1835) in 23S rRNA + S-adenosyl-L-homocysteine + H(+). Functionally, specifically methylates the guanine in position 1835 (m2G1835) of 23S rRNA. This chain is Ribosomal RNA large subunit methyltransferase G, found in Pseudoalteromonas translucida (strain TAC 125).